Here is a 240-residue protein sequence, read N- to C-terminus: Membrane-spanning 4-domains subfamily A member 15 (240 aa).

Transmembrane regions (helical) follow at residues 73–93 (VLGT…SVLL), 100–120 (VGIF…FIIS), 144–164 (ILSV…FGVT), and 173–193 (LAVL…AMHF).

This sequence belongs to the MS4A family.

The protein localises to the membrane. May be involved in signal transduction as a component of a multimeric receptor complex. This chain is Membrane-spanning 4-domains subfamily A member 15 (MS4A15), found in Homo sapiens (Human).